Reading from the N-terminus, the 311-residue chain is Olfactory receptor 10D1B (311 aa).

At 1–24 the chain is on the extracellular side; that stretch reads MKNLSVVTQFILLGIPHTEGVETM. A helical membrane pass occupies residues 25 to 45; that stretch reads LFVLFFSFYIFTLVGNLLILL. Over 46 to 54 the chain is Cytoplasmic; that stretch reads AIVSSSRLH. The helical transmembrane segment at 55–75 threads the bilayer; it reads TPMYFFLCQLSVCDIFFPSVS. Residues 76–95 are Extracellular-facing; it reads SPKMLFYLSGNTPAISYAGC. Residues Cys95 and Cys187 are joined by a disulfide bond. A helical transmembrane segment spans residues 96–116; the sequence is VSQLFFYHFLGGTECFLYTVM. The Cytoplasmic segment spans residues 117-137; it reads AYDRFVAICYPLRYSVIMSHR. Residues 138 to 158 traverse the membrane as a helical segment; the sequence is ICAFLAMGTAVFGCIHSTFLT. Over 159–192 the chain is Extracellular; that stretch reads TLTFQLPYCGPKDVNYYFCDIPVVMKLACADTST. The chain crosses the membrane as a helical span at residues 193–213; that stretch reads LEMVGFISVGLMPLSCFFFIL. At 214 to 237 the chain is on the cytoplasmic side; that stretch reads TSYSCIVRSILQIRSTEGRHRAFS. A helical membrane pass occupies residues 238–258; that stretch reads TCSAHFTAILLFYMPVIFIYL. The Extracellular segment spans residues 259–271; it reads RPTPSPWLDATVQ. A helical transmembrane segment spans residues 272-288; it reads ILNNLVTPMLNPLIYSL. The Cytoplasmic portion of the chain corresponds to 289–311; the sequence is RNKEVKSSLWTVLHLLCFLPKHL.

It belongs to the G-protein coupled receptor 1 family.

It is found in the cell membrane. Odorant receptor. The polypeptide is Olfactory receptor 10D1B (Mus musculus (Mouse)).